Here is a 207-residue protein sequence, read N- to C-terminus: B2 protein (207 aa).

Residues 1–68 (MIDQEESNFN…FKTLPPAESL (68 aa)) form a disordered region. 2 stretches are compositionally biased toward low complexity: residues 8 to 26 (NFNF…QFHG) and 35 to 52 (KNNN…GENK). In terms of domain architecture, DCD spans 72-204 (ETVGGYIFVC…AISLLDIFEE (133 aa)).

In Daucus carota (Wild carrot), this protein is B2 protein.